The sequence spans 434 residues: CCA tRNA nucleotidyltransferase 1, mitochondrial (434 aa).

The N-terminal 41 residues, 1–41, are a transit peptide targeting the mitochondrion; it reads MQSVLYPWHRQVLRCSWSRLCLLKRYLFTMKLQSPEFQSLF. Positions 64 and 67 each coordinate ATP. The CTP site is built by G64 and R67. Mg(2+)-binding residues include D77 and D79. ATP contacts are provided by R151, D194, R197, R200, and R203. Positions 151, 194, 197, 200, and 203 each coordinate CTP. A Phosphoserine modification is found at S400. K402 carries the post-translational modification N6-acetyllysine.

The protein belongs to the tRNA nucleotidyltransferase/poly(A) polymerase family. Monomer, and homodimer. It depends on Mg(2+) as a cofactor.

It localises to the mitochondrion. It is found in the cytoplasm. The protein localises to the nucleus. The enzyme catalyses a tRNA precursor + 2 CTP + ATP = a tRNA with a 3' CCA end + 3 diphosphate. The catalysed reaction is a tRNA with a 3' CCA end + 2 CTP + ATP = a tRNA with a 3' CCACCA end + 3 diphosphate. Functionally, nucleotidyltransferase that catalyzes the addition and repair of the essential 3'-terminal CCA sequence in tRNAs, which is necessary for the attachment of amino acids to the 3' terminus of tRNA molecules, using CTP and ATP as substrates. tRNA 3'-terminal CCA addition is required both for tRNA processing and repair. Promotes tRNA repair and recycling downstream of the ribosome-associated quality control (RQC) pathway by mediating addition of the tRNA 3'-terminal CCA following cleavage by ANKZF1 and repair by ELAC1. Also involved in tRNA surveillance by mediating tandem CCA addition to generate a CCACCA at the 3' terminus of unstable tRNAs and tRNA-like transcripts. While stable tRNAs receive only 3'-terminal CCA, unstable tRNAs beginning with GG are marked with CCACCA and rapidly degraded. The structural flexibility of RNA controls the choice between CCA versus CCACCA addition: following the first CCA addition cycle, nucleotide-binding to the active site triggers a clockwise screw motion, producing torque on the RNA. This ejects stable RNAs, whereas unstable RNAs are refolded while bound to the enzyme and subjected to a second CCA catalytic cycle. This Mus musculus (Mouse) protein is CCA tRNA nucleotidyltransferase 1, mitochondrial (Trnt1).